Reading from the N-terminus, the 409-residue chain is MGEQDPSDRLRGDQLKEPNQNGKGSFSQFSSSVRAMVRIRMKYQAIKKRRMEIASATPQIFTSPRSTSPKVFTFDNLHEPVNSNPASPRKRKKKRKGRVLYPTSSLRAVPTKESSRAKNCLYLLCIIVFLQVYNAIENLDDHVLKYDLEGLEKTLKREVFGQQEVAEGLLGHLQDYLSTYVHNKPLVLSFHGPTGVGKSHVGRLLAQHFRSVVGEELVMQYFVLHHCPTDDDIPVCTKSLESHISEMVSQGEEEEKIPVFIFDEVEHMPRQLMDTLRELIQPQNSNKYLNAIYILISNLGHEDITKFVLHNSSIAISGRLSLTQELTPWLRNYLQEHHGLFLDAEYLPFMLLEKSHVMDCFIDEMSREGFYPDRSHVERLAEELSYYIVGEREFSHTGCRQVVAKVNLL.

A compositionally biased stretch (basic and acidic residues) spans methionine 1–lysine 16. 2 disordered regions span residues methionine 1–glutamine 28 and aspartate 75–valine 99. The segment covering glutamate 17–glutamine 28 has biased composition (polar residues). Positions proline 88–arginine 98 are enriched in basic residues. Residues cysteine 120–isoleucine 136 traverse the membrane as a helical segment. Glycine 192 to serine 199 is a binding site for ATP.

The protein belongs to the ClpA/ClpB family. Torsin subfamily.

Its subcellular location is the membrane. This Danio rerio (Zebrafish) protein is Torsin-4A (tor4a).